A 370-amino-acid chain; its full sequence is Anhydro-N-acetylmuramic acid kinase (370 aa).

Residue 13–20 (GTSMDGVD) participates in ATP binding.

It belongs to the anhydro-N-acetylmuramic acid kinase family.

The catalysed reaction is 1,6-anhydro-N-acetyl-beta-muramate + ATP + H2O = N-acetyl-D-muramate 6-phosphate + ADP + H(+). The protein operates within amino-sugar metabolism; 1,6-anhydro-N-acetylmuramate degradation. It participates in cell wall biogenesis; peptidoglycan recycling. In terms of biological role, catalyzes the specific phosphorylation of 1,6-anhydro-N-acetylmuramic acid (anhMurNAc) with the simultaneous cleavage of the 1,6-anhydro ring, generating MurNAc-6-P. Is required for the utilization of anhMurNAc either imported from the medium or derived from its own cell wall murein, and thus plays a role in cell wall recycling. The sequence is that of Anhydro-N-acetylmuramic acid kinase from Vibrio vulnificus (strain CMCP6).